A 317-amino-acid polypeptide reads, in one-letter code: Porphobilinogen deaminase (317 aa).

Residue cysteine 245 is modified to S-(dipyrrolylmethanemethyl)cysteine.

Belongs to the HMBS family. In terms of assembly, monomer. The cofactor is dipyrromethane.

It carries out the reaction 4 porphobilinogen + H2O = hydroxymethylbilane + 4 NH4(+). Its pathway is porphyrin-containing compound metabolism; protoporphyrin-IX biosynthesis; coproporphyrinogen-III from 5-aminolevulinate: step 2/4. It participates in porphyrin-containing compound metabolism; chlorophyll biosynthesis. In terms of biological role, tetrapolymerization of the monopyrrole PBG into the hydroxymethylbilane pre-uroporphyrinogen in several discrete steps. The chain is Porphobilinogen deaminase from Synechococcus sp. (strain RCC307).